A 259-amino-acid polypeptide reads, in one-letter code: Putative protein-disulfide oxidoreductase RBE_1288 (259 aa).

A signal peptide spans 1–20 (MRNSFITLIFLLLLSGCSEE). The segment at 25 to 54 (VEQESSESITPAQASTSDENNNQTTETTTP) is disordered. A compositionally biased stretch (polar residues) spans 33 to 42 (ITPAQASTSD). A compositionally biased stretch (low complexity) spans 43–54 (ENNNQTTETTTP). The 205-residue stretch at 47 to 251 (QTTETTTPAV…ISAAIDKAIE (205 aa)) folds into the Thioredoxin domain. A disulfide bond links C104 and C107.

Belongs to the thioredoxin family. DsbA subfamily.

It is found in the periplasm. In terms of biological role, may be required for disulfide bond formation in some proteins. The protein is Putative protein-disulfide oxidoreductase RBE_1288 of Rickettsia bellii (strain RML369-C).